A 31-amino-acid polypeptide reads, in one-letter code: Cytochrome b6-f complex subunit 6 (31 aa).

The helical transmembrane segment at Ile-4–Gly-24 threads the bilayer.

Belongs to the PetL family. In terms of assembly, the 4 large subunits of the cytochrome b6-f complex are cytochrome b6, subunit IV (17 kDa polypeptide, PetD), cytochrome f and the Rieske protein, while the 4 small subunits are PetG, PetL, PetM and PetN. The complex functions as a dimer.

The protein resides in the plastid. The protein localises to the chloroplast thylakoid membrane. Component of the cytochrome b6-f complex, which mediates electron transfer between photosystem II (PSII) and photosystem I (PSI), cyclic electron flow around PSI, and state transitions. PetL is important for photoautotrophic growth as well as for electron transfer efficiency and stability of the cytochrome b6-f complex. In Chlorella vulgaris (Green alga), this protein is Cytochrome b6-f complex subunit 6.